Consider the following 186-residue polypeptide: Orotate phosphoribosyltransferase (186 aa).

Residues arginine 93, lysine 94, lysine 97, histidine 99, and 119-127 contribute to the 5-phospho-alpha-D-ribose 1-diphosphate site; that span reads EDVTTTGGS. The orotate site is built by threonine 123 and arginine 151.

This sequence belongs to the purine/pyrimidine phosphoribosyltransferase family. PyrE subfamily. In terms of assembly, homodimer. Mg(2+) is required as a cofactor.

It catalyses the reaction orotidine 5'-phosphate + diphosphate = orotate + 5-phospho-alpha-D-ribose 1-diphosphate. It functions in the pathway pyrimidine metabolism; UMP biosynthesis via de novo pathway; UMP from orotate: step 1/2. Functionally, catalyzes the transfer of a ribosyl phosphate group from 5-phosphoribose 1-diphosphate to orotate, leading to the formation of orotidine monophosphate (OMP). In Pyrococcus horikoshii (strain ATCC 700860 / DSM 12428 / JCM 9974 / NBRC 100139 / OT-3), this protein is Orotate phosphoribosyltransferase.